The chain runs to 449 residues: Mitochondrial distribution and morphology protein 10 (449 aa).

Disordered stretches follow at residues 215 to 244 (GPSE…DEED) and 282 to 307 (DATP…GAPS). The span at 285-301 (PPSFQLPSSSPTQPSLL) shows a compositional bias: low complexity.

The protein belongs to the MDM10 family. As to quaternary structure, component of the ER-mitochondria encounter structure (ERMES) or MDM complex, composed of MMM1, MDM10, MDM12 and MDM34. Associates with the mitochondrial outer membrane sorting assembly machinery SAM(core) complex.

The protein localises to the mitochondrion outer membrane. Its function is as follows. Component of the ERMES/MDM complex, which serves as a molecular tether to connect the endoplasmic reticulum and mitochondria. Components of this complex are involved in the control of mitochondrial shape and protein biogenesis and may function in phospholipid exchange. MDM10 is involved in the late assembly steps of the general translocase of the mitochondrial outer membrane (TOM complex). Functions in the TOM40-specific route of the assembly of outer membrane beta-barrel proteins, including the association of TOM40 with the receptor TOM22 and small TOM proteins. Can associate with the SAM(core) complex as well as the MDM12-MMM1 complex, both involved in late steps of the major beta-barrel assembly pathway, that is responsible for biogenesis of all outer membrane beta-barrel proteins. May act as a switch that shuttles between both complexes and channels precursor proteins into the TOM40-specific pathway. Plays a role in mitochondrial morphology and in the inheritance of mitochondria. The polypeptide is Mitochondrial distribution and morphology protein 10 (Postia placenta (strain ATCC 44394 / Madison 698-R) (Brown rot fungus)).